Consider the following 148-residue polypeptide: 3-dehydroquinate dehydratase (148 aa).

Catalysis depends on Tyr-23, which acts as the Proton acceptor. Residues Asn-75, His-81, and Asp-88 each coordinate substrate. The active-site Proton donor is His-101. Substrate is bound by residues 102–103 (LS) and Arg-112.

It belongs to the type-II 3-dehydroquinase family. As to quaternary structure, homododecamer.

The enzyme catalyses 3-dehydroquinate = 3-dehydroshikimate + H2O. It functions in the pathway metabolic intermediate biosynthesis; chorismate biosynthesis; chorismate from D-erythrose 4-phosphate and phosphoenolpyruvate: step 3/7. Catalyzes a trans-dehydration via an enolate intermediate. The chain is 3-dehydroquinate dehydratase from Xanthomonas campestris pv. campestris (strain B100).